A 217-amino-acid polypeptide reads, in one-letter code: Adenylate kinase (217 aa).

ATP is bound at residue 10 to 15; the sequence is GAGKGT. The tract at residues 30 to 59 is NMP; it reads STGDIFRKNVADDTPLGRLAKQYMDAGDLV. AMP-binding positions include T31, R36, 57–59, 85–88, and Q92; these read DLV and GFPR. The LID stretch occupies residues 126–163; that stretch reads GRRTCADCAHVWHVTYDPPTVDGVCDLCGGKLFQREDD. ATP is bound at residue R127. Zn(2+) is bound by residues C130, C133, C150, and C153. 2 residues coordinate AMP: R160 and R171. G199 provides a ligand contact to ATP.

This sequence belongs to the adenylate kinase family. In terms of assembly, monomer.

It localises to the cytoplasm. It catalyses the reaction AMP + ATP = 2 ADP. It functions in the pathway purine metabolism; AMP biosynthesis via salvage pathway; AMP from ADP: step 1/1. In terms of biological role, catalyzes the reversible transfer of the terminal phosphate group between ATP and AMP. Plays an important role in cellular energy homeostasis and in adenine nucleotide metabolism. This is Adenylate kinase from Acidothermus cellulolyticus (strain ATCC 43068 / DSM 8971 / 11B).